Here is a 163-residue protein sequence, read N- to C-terminus: ECF RNA polymerase sigma factor SigM (163 aa).

The short motif at D30–I43 is the Polymerase core binding element. Residues Y127 to F146 constitute a DNA-binding region (H-T-H motif).

The protein belongs to the sigma-70 factor family. ECF subfamily. As to quaternary structure, interacts with the N-terminus of YhdL, which is probably its anti-sigma factor. Interacts transiently with the RNAP core.

Functionally, sigma factors are initiation factors that promote the attachment of RNA polymerase (RNAP) to specific initiation sites and are then released. Extracytoplasmic function (ECF) sigma factors are held in an inactive form by a cognate anti-sigma factor (YhdL) until released. This sigma factor is involved in the maintenance of membrane and cell wall integrity in response to environmental stresses including salt, acid, ethanol and antibiotics stress. Partially regulates transcription from a number of genes including disA. Associates with RNAP core under all growth phases. This Bacillus subtilis (strain 168) protein is ECF RNA polymerase sigma factor SigM (sigM).